Here is a 175-residue protein sequence, read N- to C-terminus: Ribosome maturation factor RimM (175 aa).

A PRC barrel domain is found at 96–175 (EGDYYWHDLI…TIEVDWDAGF (80 aa)).

This sequence belongs to the RimM family. Binds ribosomal protein uS19.

The protein resides in the cytoplasm. An accessory protein needed during the final step in the assembly of 30S ribosomal subunit, possibly for assembly of the head region. Essential for efficient processing of 16S rRNA. May be needed both before and after RbfA during the maturation of 16S rRNA. It has affinity for free ribosomal 30S subunits but not for 70S ribosomes. This chain is Ribosome maturation factor RimM, found in Actinobacillus succinogenes (strain ATCC 55618 / DSM 22257 / CCUG 43843 / 130Z).